The following is a 246-amino-acid chain: tRNA pseudouridine synthase A (246 aa).

The active-site Nucleophile is the Asp-52. Tyr-111 is a substrate binding site.

It belongs to the tRNA pseudouridine synthase TruA family. Homodimer.

It carries out the reaction uridine(38/39/40) in tRNA = pseudouridine(38/39/40) in tRNA. Functionally, formation of pseudouridine at positions 38, 39 and 40 in the anticodon stem and loop of transfer RNAs. The sequence is that of tRNA pseudouridine synthase A from Parvibaculum lavamentivorans (strain DS-1 / DSM 13023 / NCIMB 13966).